A 237-amino-acid chain; its full sequence is uncharacterized protein (237 aa).

The 206-residue stretch at 13–218 (VVGLSGGVAT…KSWKPYIFRV (206 aa)) folds into the DPCK domain. 18 to 25 (GGVATGKS) is an ATP binding site.

It belongs to the CoaE family.

This is an uncharacterized protein from Caenorhabditis elegans.